The chain runs to 98 residues: snRNA-activating protein complex subunit 5 (98 aa).

Positions A75–S98 are disordered. The span at E86 to S98 shows a compositional bias: acidic residues.

Part of the SNAPc complex composed of 5 subunits: SNAPC1, SNAPC2, SNAPC3, SNAPC4 and SNAPC5. SNAPC5 interacts with SNAPC4.

It localises to the nucleus. Part of the SNAPc complex required for the transcription of both RNA polymerase II and III small-nuclear RNA genes. Binds to the proximal sequence element (PSE), a non-TATA-box basal promoter element common to these 2 types of genes. Recruits TBP and BRF2 to the U6 snRNA TATA box. The protein is snRNA-activating protein complex subunit 5 (SNAPC5) of Bos taurus (Bovine).